A 162-amino-acid chain; its full sequence is Serine-protein kinase RsbW (162 aa).

It belongs to the anti-sigma-factor family.

It carries out the reaction L-seryl-[protein] + ATP = O-phospho-L-seryl-[protein] + ADP + H(+). The enzyme catalyses L-threonyl-[protein] + ATP = O-phospho-L-threonyl-[protein] + ADP + H(+). Negative regulator of sigma-B activity. Phosphorylates and inactivates its specific antagonist protein, RsbV. Upon phosphorylation of RsbV, RsbW is released and binds to sigma-B, thereby blocking its ability to form an RNA polymerase holoenzyme (E-sigma-B). This Halalkalibacterium halodurans (strain ATCC BAA-125 / DSM 18197 / FERM 7344 / JCM 9153 / C-125) (Bacillus halodurans) protein is Serine-protein kinase RsbW.